A 129-amino-acid polypeptide reads, in one-letter code: UPF0102 protein RD1_1191 (129 aa).

Belongs to the UPF0102 family.

This is UPF0102 protein RD1_1191 from Roseobacter denitrificans (strain ATCC 33942 / OCh 114) (Erythrobacter sp. (strain OCh 114)).